We begin with the raw amino-acid sequence, 365 residues long: tRNA/tmRNA (uracil-C(5))-methyltransferase (365 aa).

S-adenosyl-L-methionine-binding residues include Gln-196, Tyr-224, Asn-229, Glu-245, and Asp-298. Cys-323 acts as the Nucleophile in catalysis. Catalysis depends on Glu-357, which acts as the Proton acceptor.

It belongs to the class I-like SAM-binding methyltransferase superfamily. RNA M5U methyltransferase family. TrmA subfamily.

The catalysed reaction is uridine(54) in tRNA + S-adenosyl-L-methionine = 5-methyluridine(54) in tRNA + S-adenosyl-L-homocysteine + H(+). The enzyme catalyses uridine(341) in tmRNA + S-adenosyl-L-methionine = 5-methyluridine(341) in tmRNA + S-adenosyl-L-homocysteine + H(+). Functionally, dual-specificity methyltransferase that catalyzes the formation of 5-methyluridine at position 54 (m5U54) in all tRNAs, and that of position 341 (m5U341) in tmRNA (transfer-mRNA). In Nautilia profundicola (strain ATCC BAA-1463 / DSM 18972 / AmH), this protein is tRNA/tmRNA (uracil-C(5))-methyltransferase.